The following is a 193-amino-acid chain: MTSPMKGLLKGLRYIARIFEDEKEPEMQIGIPTDVKHVAHIGWEGPSATTPSWMHDFKPTDQTKTETKGTSNKKPGSSGEKHRKGRRKTSTGNNSPTESPSRVGGSVRPSKRNTGKQREQNTGSGSESGSGLELPQQTDQFVVPKQSKQKKSKGSATGGGEPPPSNEPSNKKETDISVRAVYPCAGLGSSTGR.

A CRIB domain is found at 29 to 42 (IGIPTDVKHVAHIG). Residues 42-193 (GWEGPSATTP…CAGLGSSTGR (152 aa)) form a disordered region. The span at 55 to 67 (HDFKPTDQTKTET) shows a compositional bias: basic and acidic residues. The span at 90–100 (STGNNSPTESP) shows a compositional bias: polar residues. Low complexity predominate over residues 123–134 (GSGSESGSGLEL).

As to quaternary structure, interacts with ARAC11/ROP1. In terms of tissue distribution, expressed in flowers and pollen.

The protein localises to the cell membrane. Functionally, functions as a downstream effector of Rho-related GTP binding proteins of the 'Rho of Plants' (ROPs) family. Participates in the propagation of ROP GTPase signals in specific cellular responses. Is involved in pollen tube growth regulation through its interaction with ARAC11/ROP1. This chain is CRIB domain-containing protein RIC5 (RIC5), found in Arabidopsis thaliana (Mouse-ear cress).